We begin with the raw amino-acid sequence, 388 residues long: Chorismate synthase (388 aa).

NADP(+) contacts are provided by R39 and R45. FMN-binding positions include 130 to 132 (RSS), 251 to 252 (NA), G296, 311 to 315 (KPIPT), and R337.

This sequence belongs to the chorismate synthase family. As to quaternary structure, homotetramer. It depends on FMNH2 as a cofactor.

The enzyme catalyses 5-O-(1-carboxyvinyl)-3-phosphoshikimate = chorismate + phosphate. The protein operates within metabolic intermediate biosynthesis; chorismate biosynthesis; chorismate from D-erythrose 4-phosphate and phosphoenolpyruvate: step 7/7. Its function is as follows. Catalyzes the anti-1,4-elimination of the C-3 phosphate and the C-6 proR hydrogen from 5-enolpyruvylshikimate-3-phosphate (EPSP) to yield chorismate, which is the branch point compound that serves as the starting substrate for the three terminal pathways of aromatic amino acid biosynthesis. This reaction introduces a second double bond into the aromatic ring system. This chain is Chorismate synthase, found in Streptococcus thermophilus (strain CNRZ 1066).